Reading from the N-terminus, the 191-residue chain is Large ribosomal subunit protein uL3 (191 aa).

The tract at residues 115 to 137 (GGPASHGSRFHRRHGSIGNREWP) is disordered.

Belongs to the universal ribosomal protein uL3 family. Part of the 50S ribosomal subunit. Forms a cluster with proteins L14 and L19.

In terms of biological role, one of the primary rRNA binding proteins, it binds directly near the 3'-end of the 23S rRNA, where it nucleates assembly of the 50S subunit. The protein is Large ribosomal subunit protein uL3 (rplC) of Campylobacter jejuni subsp. jejuni serotype O:2 (strain ATCC 700819 / NCTC 11168).